The sequence spans 413 residues: Glutamyl-tRNA reductase (413 aa).

Substrate-binding positions include 49-52 (TCNR), Ser105, 110-112 (EPQ), and Gln116. Cys50 serves as the catalytic Nucleophile. Residue 185 to 190 (GAGETI) participates in NADP(+) binding.

The protein belongs to the glutamyl-tRNA reductase family. In terms of assembly, homodimer.

The catalysed reaction is (S)-4-amino-5-oxopentanoate + tRNA(Glu) + NADP(+) = L-glutamyl-tRNA(Glu) + NADPH + H(+). The protein operates within porphyrin-containing compound metabolism; protoporphyrin-IX biosynthesis; 5-aminolevulinate from L-glutamyl-tRNA(Glu): step 1/2. Its function is as follows. Catalyzes the NADPH-dependent reduction of glutamyl-tRNA(Glu) to glutamate 1-semialdehyde (GSA). The sequence is that of Glutamyl-tRNA reductase from Coxiella burnetii (strain Dugway 5J108-111).